Reading from the N-terminus, the 359-residue chain is Lactosylceramide 4-alpha-galactosyltransferase (359 aa).

Over 1–30 the chain is Cytoplasmic; that stretch reads MGISCSHLEETMSKPPDCLLRMLRGTPRQR. A helical; Signal-anchor for type II membrane protein membrane pass occupies residues 31–51; it reads VFTFFIISFKFMFLISILIYW. The Lumenal segment spans residues 52–359; it reads HTVGAPKDQR…TTHRAMKMYL (308 aa). A DXD motif motif is present at residues 198–200; sequence DTD. Asn-209 and Asn-315 each carry an N-linked (GlcNAc...) asparagine glycan.

Belongs to the glycosyltransferase 32 family.

It localises to the golgi apparatus membrane. The enzyme catalyses a beta-D-Gal-(1-&gt;4)-beta-D-Glc-(1&lt;-&gt;1)-Cer(d18:1(4E)) + UDP-alpha-D-galactose = a globoside Gb3Cer (d18:1(4E)) + UDP + H(+). The catalysed reaction is a beta-D-Gal-(1&lt;-&gt;1')-ceramide + UDP-alpha-D-galactose = alpha-D-Gal-(1-&gt;4)-beta-D-Gal-(1&lt;-&gt;1')-Cer + UDP + H(+). It functions in the pathway glycolipid biosynthesis. Its function is as follows. Catalyzes the transfer of galactose from UDP-alpha-D-galactose to lactosylceramide/beta-D-galactosyl-(1-&gt;4)-beta-D-glucosyl-(1&lt;-&gt;1)-ceramide(d18:1(4E)) to produce globotriaosylceramide/globoside Gb3Cer (d18:1(4E)). Also able to transfer galactose to galactosylceramide/beta-D-Gal-(1&lt;-&gt;1')-Cer. Globoside Gb3Cer is a glycosphingolipid of the globo serie, one of the major types of neutral root structures of glycosphingolipids, that constitute a significant portion of mammalian cell membranes. The protein is Lactosylceramide 4-alpha-galactosyltransferase of Mus musculus (Mouse).